An 88-amino-acid chain; its full sequence is Small ribosomal subunit protein bS20 (88 aa).

The protein belongs to the bacterial ribosomal protein bS20 family.

Functionally, binds directly to 16S ribosomal RNA. The protein is Small ribosomal subunit protein bS20 of Desulforudis audaxviator (strain MP104C).